Consider the following 583-residue polypeptide: Protein translocase subunit SecD (583 aa).

A run of 6 helical transmembrane segments spans residues 7–27 (FGVV…TLQW), 419–439 (LVWG…EAGV), 446–468 (LLNL…LSSI), 469–489 (AGMI…FERI), 511–531 (FWAI…LSVL), and 538–558 (GFAY…LFVS).

Belongs to the SecD/SecF family. SecD subfamily. Forms a complex with SecF. Part of the essential Sec protein translocation apparatus which comprises SecA, SecYEG and auxiliary proteins SecDF. Other proteins may also be involved.

The protein resides in the cell inner membrane. In terms of biological role, part of the Sec protein translocase complex. Interacts with the SecYEG preprotein conducting channel. SecDF uses the proton motive force (PMF) to complete protein translocation after the ATP-dependent function of SecA. The chain is Protein translocase subunit SecD from Treponema pallidum (strain Nichols).